The primary structure comprises 251 residues: 2,3-bisphosphoglycerate-dependent phosphoglycerate mutase (251 aa).

Residues 11 to 18, 24 to 25, arginine 63, 90 to 93, lysine 101, 117 to 118, and 184 to 185 each bind substrate; these read RHGESDWN, TG, ERHY, RR, and GN. Histidine 12 serves as the catalytic Tele-phosphohistidine intermediate. Glutamate 90 acts as the Proton donor/acceptor in catalysis.

This sequence belongs to the phosphoglycerate mutase family. BPG-dependent PGAM subfamily.

It carries out the reaction (2R)-2-phosphoglycerate = (2R)-3-phosphoglycerate. It functions in the pathway carbohydrate degradation; glycolysis; pyruvate from D-glyceraldehyde 3-phosphate: step 3/5. Its function is as follows. Catalyzes the interconversion of 2-phosphoglycerate and 3-phosphoglycerate. This is 2,3-bisphosphoglycerate-dependent phosphoglycerate mutase from Mycobacterium marinum (strain ATCC BAA-535 / M).